Reading from the N-terminus, the 360-residue chain is NAD(P)H-quinone oxidoreductase subunit 1, chloroplastic (360 aa).

8 helical membrane passes run 27 to 47 (VWIF…VLVI), 98 to 118 (FSIG…VIPF), 129 to 149 (IGIF…LMSG), 165 to 185 (AAQS…ISLL), 203 to 223 (FWGW…ISSL), 253 to 273 (FGLF…FVTI), 297 to 317 (VFGT…VLVI), and 340 to 360 (FLLP…LLSL).

Belongs to the complex I subunit 1 family. NDH is composed of at least 16 different subunits, 5 of which are encoded in the nucleus.

The protein resides in the plastid. It localises to the chloroplast thylakoid membrane. The catalysed reaction is a plastoquinone + NADH + (n+1) H(+)(in) = a plastoquinol + NAD(+) + n H(+)(out). The enzyme catalyses a plastoquinone + NADPH + (n+1) H(+)(in) = a plastoquinol + NADP(+) + n H(+)(out). Its function is as follows. NDH shuttles electrons from NAD(P)H:plastoquinone, via FMN and iron-sulfur (Fe-S) centers, to quinones in the photosynthetic chain and possibly in a chloroplast respiratory chain. The immediate electron acceptor for the enzyme in this species is believed to be plastoquinone. Couples the redox reaction to proton translocation, and thus conserves the redox energy in a proton gradient. The chain is NAD(P)H-quinone oxidoreductase subunit 1, chloroplastic from Draba nemorosa (Woodland whitlowgrass).